A 366-amino-acid polypeptide reads, in one-letter code: Quinolinate synthase (366 aa).

The iminosuccinate site is built by histidine 44 and serine 61. Cysteine 108 serves as a coordination point for [4Fe-4S] cluster. Residues 139 to 141 (YVN) and serine 160 contribute to the iminosuccinate site. [4Fe-4S] cluster is bound at residue cysteine 228. Iminosuccinate-binding positions include 254 to 256 (HPE) and threonine 271. Cysteine 318 is a binding site for [4Fe-4S] cluster.

The protein belongs to the quinolinate synthase family. Type 3 subfamily. [4Fe-4S] cluster is required as a cofactor.

It localises to the cytoplasm. It catalyses the reaction iminosuccinate + dihydroxyacetone phosphate = quinolinate + phosphate + 2 H2O + H(+). Its pathway is cofactor biosynthesis; NAD(+) biosynthesis; quinolinate from iminoaspartate: step 1/1. Its function is as follows. Catalyzes the condensation of iminoaspartate with dihydroxyacetone phosphate to form quinolinate. The protein is Quinolinate synthase of Staphylococcus carnosus (strain TM300).